A 327-amino-acid chain; its full sequence is Olfactory receptor 51T1 (327 aa).

Residues 1 to 27 are Extracellular-facing; sequence MAIFNNTTSSSSNFLLTAFPGLECAHV. 2 N-linked (GlcNAc...) asparagine glycosylation sites follow: asparagine 5 and asparagine 6. A helical transmembrane segment spans residues 28–48; it reads WISIPVCCLYTIALLGNSMIF. The Cytoplasmic portion of the chain corresponds to 49–56; it reads LVIITKRR. A helical transmembrane segment spans residues 57 to 77; it reads LHKPMYYFLSMLAAVDLCLTI. Over 78-101 the chain is Extracellular; that stretch reads TTLPTVLGVLWFHAREISFKACFI. A helical transmembrane segment spans residues 102–122; the sequence is QMFFVHAFSLLESSVLVAMAF. Residues 123 to 141 lie on the Cytoplasmic side of the membrane; sequence DRFVAICNPLNYATILTDR. A helical membrane pass occupies residues 142-162; sequence MVLVIGLVICIRPAVFLLPLL. Residues 163-198 lie on the Extracellular side of the membrane; it reads VAINTVSFHGGHELSHPFCYHPEVIKYTYSKPWISS. Residues 199–219 traverse the membrane as a helical segment; that stretch reads FWGLFLQLYLNGTDVLFILFS. Over 220-239 the chain is Cytoplasmic; it reads YVLILRTVLGIVARKKQQKA. A helical membrane pass occupies residues 240-260; it reads LSTCVCHICAVTIFYVPLISL. The Extracellular segment spans residues 261 to 275; sequence SLAHRLFHSTPRVLC. The helical transmembrane segment at 276 to 296 threads the bilayer; sequence STLANIYLLLPPVLNPIIYSL. Residues 297 to 327 lie on the Cytoplasmic side of the membrane; it reads KTKTIRQAMFQLLQSKGSWGFNVRGLRGRWD.

Belongs to the G-protein coupled receptor 1 family.

It is found in the cell membrane. Odorant receptor. This is Olfactory receptor 51T1 (OR51T1) from Homo sapiens (Human).